The primary structure comprises 275 residues: Light-independent protochlorophyllide reductase iron-sulfur ATP-binding protein (275 aa).

ATP contacts are provided by residues 12-17 (GIGKST) and K41. S16 contacts Mg(2+). [4Fe-4S] cluster contacts are provided by C97 and C131. 182–183 (NR) contacts ATP.

Belongs to the NifH/BchL/ChlL family. Homodimer. Protochlorophyllide reductase is composed of three subunits; BchL, BchN and BchB. [4Fe-4S] cluster serves as cofactor.

The enzyme catalyses chlorophyllide a + oxidized 2[4Fe-4S]-[ferredoxin] + 2 ADP + 2 phosphate = protochlorophyllide a + reduced 2[4Fe-4S]-[ferredoxin] + 2 ATP + 2 H2O. It participates in porphyrin-containing compound metabolism; bacteriochlorophyll biosynthesis (light-independent). Component of the dark-operative protochlorophyllide reductase (DPOR) that uses Mg-ATP and reduced ferredoxin to reduce ring D of protochlorophyllide (Pchlide) to form chlorophyllide a (Chlide). This reaction is light-independent. The L component serves as a unique electron donor to the NB-component of the complex, and binds Mg-ATP. The polypeptide is Light-independent protochlorophyllide reductase iron-sulfur ATP-binding protein (Chlorobium phaeobacteroides (strain BS1)).